Reading from the N-terminus, the 241-residue chain is tRNA pseudouridine synthase B (241 aa).

The Nucleophile role is filled by Asp-45.

Belongs to the pseudouridine synthase TruB family. Type 1 subfamily.

It catalyses the reaction uridine(55) in tRNA = pseudouridine(55) in tRNA. Its function is as follows. Responsible for synthesis of pseudouridine from uracil-55 in the psi GC loop of transfer RNAs. This Chlamydia muridarum (strain MoPn / Nigg) protein is tRNA pseudouridine synthase B.